The following is a 326-amino-acid chain: NAD kinase (326 aa).

The active-site Proton acceptor is Asp-93. NAD(+) is bound by residues 93-94, Arg-98, 171-172, Arg-182, Asp-201, and 212-217; these read DG, NE, and TAHAFS.

This sequence belongs to the NAD kinase family. A divalent metal cation is required as a cofactor.

It is found in the cytoplasm. It catalyses the reaction NAD(+) + ATP = ADP + NADP(+) + H(+). Its function is as follows. Involved in the regulation of the intracellular balance of NAD and NADP, and is a key enzyme in the biosynthesis of NADP. Catalyzes specifically the phosphorylation on 2'-hydroxyl of the adenosine moiety of NAD to yield NADP. This chain is NAD kinase, found in Thermobifida fusca (strain YX).